Consider the following 443-residue polypeptide: Glutamyl-tRNA reductase (443 aa).

Residues 49-52 (TCNR), Ser-109, 114-116 (ETQ), and Gln-120 each bind substrate. Cys-50 (nucleophile) is an active-site residue. 189–194 (GAGKMG) contacts NADP(+).

This sequence belongs to the glutamyl-tRNA reductase family. As to quaternary structure, homodimer.

The enzyme catalyses (S)-4-amino-5-oxopentanoate + tRNA(Glu) + NADP(+) = L-glutamyl-tRNA(Glu) + NADPH + H(+). It functions in the pathway porphyrin-containing compound metabolism; protoporphyrin-IX biosynthesis; 5-aminolevulinate from L-glutamyl-tRNA(Glu): step 1/2. Functionally, catalyzes the NADPH-dependent reduction of glutamyl-tRNA(Glu) to glutamate 1-semialdehyde (GSA). The polypeptide is Glutamyl-tRNA reductase (Bacillus mycoides (strain KBAB4) (Bacillus weihenstephanensis)).